Consider the following 568-residue polypeptide: Multidrug and toxin extrusion protein 1 (568 aa).

Position 1 is an N-acetylmethionine (Met-1). Residues 1-36 are Cytoplasmic-facing; the sequence is MEAPVELGPGGRQASPERRHWLRCLVLSDFREELRA. The chain crosses the membrane as a helical span at residues 37-57; that stretch reads LLVLACPAFLAQLMVFLISFV. The Extracellular segment spans residues 58–71; the sequence is SSVFCGHLSKLELN. The helical transmembrane segment at 72-92 threads the bilayer; sequence AVTLAIAVINVMGVSVGFGLS. At 93–119 the chain is on the cytoplasmic side; it reads SACDTLISQTYGSRNLKHVGVILQRGS. The helical transmembrane segment at 120–140 threads the bilayer; it reads LILLLCCLPCWALFLNTQHIL. Residues 141 to 151 are Extracellular-facing; it reads LLFRQDPAVSR. Residues 152 to 172 form a helical membrane-spanning segment; the sequence is LTQTYVTIFIPALPATFLYTL. The Cytoplasmic segment spans residues 173–175; sequence QVK. Residues 176–196 form a helical membrane-spanning segment; that stretch reads YLLNQGIVLPQVVTGVAANLV. The Extracellular portion of the chain corresponds to 197 to 214; sequence NALANYLFVYQLHLGVMG. A helical membrane pass occupies residues 215-235; that stretch reads SALANTVAQFTLALLLFLYIL. Over 236-255 the chain is Cytoplasmic; it reads RSKVYQATWGGWSLECLQDW. A helical membrane pass occupies residues 256 to 278; sequence ASFFRLAIPSMLMLCMEWWAYEI. Topologically, residues 279 to 294 are extracellular; it reads GSFLSGILGMVELGAQ. Residues 295 to 315 traverse the membrane as a helical segment; sequence SVTYELAVIVYMIPMGLSVAV. Over 316–335 the chain is Cytoplasmic; it reads NVRVGNALGAGNIEQAKKSS. A helical membrane pass occupies residues 336 to 356; sequence AVALLVTELIAVVFCVMLLSC. Topologically, residues 357–369 are extracellular; that stretch reads KDLVGYIFTSDRD. A helical transmembrane segment spans residues 370-390; that stretch reads IIALVAQVTPIYAVSHLFESL. The Cytoplasmic portion of the chain corresponds to 391–407; sequence AGTSGGILRGSGNQKFG. Residues 408–430 form a helical membrane-spanning segment; it reads AIVNAIGYYVVGLPIGIALMFAA. Residues 431-433 are Extracellular-facing; it reads KLG. Residues 434–456 traverse the membrane as a helical segment; the sequence is VIGLWLGIVVCAVSQAVCFLGFI. At 457–544 the chain is on the cytoplasmic side; the sequence is ARLNWTKACQ…LSGKQLALRR (88 aa). Residues 545-565 traverse the membrane as a helical segment; sequence GLLLLGVILVLLAGILVKVYV. The Extracellular portion of the chain corresponds to 566-568; the sequence is RTQ.

It belongs to the multi antimicrobial extrusion (MATE) (TC 2.A.66.1) family. In terms of tissue distribution, predominantly expressed in kidney and liver.

It localises to the cell membrane. The protein resides in the apical cell membrane. The catalysed reaction is thiamine(out) + H(+)(in) = thiamine(in) + H(+)(out). The enzyme catalyses estrone 3-sulfate(in) + H(+)(out) = estrone 3-sulfate(out) + H(+)(in). It carries out the reaction creatinine(in) + H(+)(out) = creatinine(out) + H(+)(in). It catalyses the reaction agmatine(in) + H(+)(out) = agmatine(out) + H(+)(in). Its function is as follows. Multidrug efflux pump that functions as a H(+)/organic cation antiporter. Plays a physiological role in the excretion of cationic compounds including endogenous metabolites, drugs, toxins through the kidney and liver, into urine and bile respectively. Mediates the efflux of endogenous compounds such as creatinine, vitamin B1/thiamine, agmatine and estrone-3-sulfate. May also contribute to regulate the transport of cationic compounds in testis across the blood-testis-barrier. In Oryctolagus cuniculus (Rabbit), this protein is Multidrug and toxin extrusion protein 1 (SLC47A1).